A 621-amino-acid chain; its full sequence is Signal recognition particle receptor subunit alpha homolog (621 aa).

The interval 1-158 is SRX; sequence MFDQLAVFTP…KKFEQYFRIK (158 aa). The segment at 167–217 is disordered; that stretch reads HINPDNFTKNGSVPQSHNKNTKKKLRDTKGKKQSTGNVGSGRKWGRDGGML. A compositionally biased stretch (polar residues) spans 171 to 183; the sequence is DNFTKNGSVPQSH. Over residues 185–198 the composition is skewed to basic residues; sequence KNTKKKLRDTKGKK. Serine 239 carries the phosphoserine modification. Positions 398-620 are NG domain; sequence YVFSIVGVNG…SVKWAVNTLM (223 aa). GTP-binding positions include 404 to 411 and 510 to 514; these read GVNGVGKS and DTAGR. Residue serine 523 is modified to Phosphoserine. 572–575 serves as a coordination point for GTP; the sequence is SKCD.

The protein belongs to the GTP-binding SRP family. In terms of assembly, heterodimer of an alpha and a beta chain.

The protein localises to the endoplasmic reticulum membrane. Its function is as follows. Component of the SRP (signal recognition particle) receptor (SR). Ensures, in conjunction with the signal recognition particle, the correct targeting of the nascent secretory proteins to the endoplasmic reticulum membrane system. GTP hydrolysis may enhance the fidelity of and provide unidirectionality to the targeting reaction. It is important but not essential for cell growth. May be directly involved in mitochondrial protein import. The sequence is that of Signal recognition particle receptor subunit alpha homolog (SRP101) from Saccharomyces cerevisiae (strain ATCC 204508 / S288c) (Baker's yeast).